A 346-amino-acid chain; its full sequence is Probable electron transfer flavoprotein subunit alpha, mitochondrial (346 aa).

An FAD-binding site is contributed by L285–D313.

The protein belongs to the ETF alpha-subunit/FixB family. Heterodimer of an alpha and a beta subunit. The cofactor is FAD.

It localises to the mitochondrion matrix. Its function is as follows. The electron transfer flavoprotein serves as a specific electron acceptor for several dehydrogenases, including five acyl-CoA dehydrogenases, glutaryl-CoA and sarcosine dehydrogenase. It transfers the electrons to the main mitochondrial respiratory chain via ETF-ubiquinone oxidoreductase (ETF dehydrogenase). In Cryptococcus gattii serotype B (strain WM276 / ATCC MYA-4071) (Filobasidiella gattii), this protein is Probable electron transfer flavoprotein subunit alpha, mitochondrial (ETF1).